A 295-amino-acid polypeptide reads, in one-letter code: 4-diphosphocytidyl-2-C-methyl-D-erythritol kinase (295 aa).

Lys-18 is a catalytic residue. 101 to 111 serves as a coordination point for ATP; it reads PMGGGIGGGSS. Asp-143 is a catalytic residue.

It belongs to the GHMP kinase family. IspE subfamily.

The enzyme catalyses 4-CDP-2-C-methyl-D-erythritol + ATP = 4-CDP-2-C-methyl-D-erythritol 2-phosphate + ADP + H(+). It participates in isoprenoid biosynthesis; isopentenyl diphosphate biosynthesis via DXP pathway; isopentenyl diphosphate from 1-deoxy-D-xylulose 5-phosphate: step 3/6. Catalyzes the phosphorylation of the position 2 hydroxy group of 4-diphosphocytidyl-2C-methyl-D-erythritol. This is 4-diphosphocytidyl-2-C-methyl-D-erythritol kinase from Vibrio cholerae serotype O1 (strain ATCC 39315 / El Tor Inaba N16961).